A 214-amino-acid chain; its full sequence is SH3 domain-binding glutamic acid-rich protein (214 aa).

The short motif at 61–67 (NGIPLPP) is the SH3-binding element. The disordered stretch occupies residues 101-214 (PGSKVTKSEE…EEEAGEGEDS (114 aa)). Basic and acidic residues predominate over residues 129 to 144 (GTEKAEKSGENEAQKE). 2 stretches are compositionally biased toward acidic residues: residues 162–192 (EGED…EAPE) and 198–214 (EAEE…GEDS).

This sequence belongs to the SH3BGR family.

This Mus musculus (Mouse) protein is SH3 domain-binding glutamic acid-rich protein (Sh3bgr).